The following is a 226-amino-acid chain: Elongation factor 1-delta (226 aa).

The disordered stretch occupies residues 82–131 (SSVATPPVADTKASAAEDDDDDDVDLFGEETEEEKKASEERAAAVKASGK). Acidic residues predominate over residues 97 to 113 (AEDDDDDDVDLFGEETE). The span at 114–124 (EEKKASEERAA) shows a compositional bias: basic and acidic residues.

Belongs to the EF-1-beta/EF-1-delta family. EF-1 is composed of 4 subunits: alpha, beta (1B-alpha=beta'), delta (1B-beta), and gamma (1B-gamma).

EF-1-beta and EF-1-beta' stimulate the exchange of GDP bound to EF-1-alpha to GTP. In Spuriopimpinella brachycarpa (Chamnamul), this protein is Elongation factor 1-delta.